The following is a 447-amino-acid chain: Glutamate--tRNA ligase 1 (447 aa).

Positions 10–20 (PSPTGMLHVGN) match the 'HIGH' region motif. A 'KMSKS' region motif is present at residues 240-244 (KISKR). Residue Lys243 coordinates ATP.

This sequence belongs to the class-I aminoacyl-tRNA synthetase family. Glutamate--tRNA ligase type 1 subfamily. In terms of assembly, monomer.

It localises to the cytoplasm. It carries out the reaction tRNA(Glu) + L-glutamate + ATP = L-glutamyl-tRNA(Glu) + AMP + diphosphate. Its function is as follows. Catalyzes the attachment of glutamate to tRNA(Glu) in a two-step reaction: glutamate is first activated by ATP to form Glu-AMP and then transferred to the acceptor end of tRNA(Glu). In Rickettsia massiliae (strain Mtu5), this protein is Glutamate--tRNA ligase 1.